The following is a 173-amino-acid chain: Crossover junction endodeoxyribonuclease RuvC (173 aa).

Catalysis depends on residues D8, E67, and D139. Mg(2+) is bound by residues D8, E67, and D139.

The protein belongs to the RuvC family. In terms of assembly, homodimer which binds Holliday junction (HJ) DNA. The HJ becomes 2-fold symmetrical on binding to RuvC with unstacked arms; it has a different conformation from HJ DNA in complex with RuvA. In the full resolvosome a probable DNA-RuvA(4)-RuvB(12)-RuvC(2) complex forms which resolves the HJ. Mg(2+) is required as a cofactor.

The protein resides in the cytoplasm. It catalyses the reaction Endonucleolytic cleavage at a junction such as a reciprocal single-stranded crossover between two homologous DNA duplexes (Holliday junction).. In terms of biological role, the RuvA-RuvB-RuvC complex processes Holliday junction (HJ) DNA during genetic recombination and DNA repair. Endonuclease that resolves HJ intermediates. Cleaves cruciform DNA by making single-stranded nicks across the HJ at symmetrical positions within the homologous arms, yielding a 5'-phosphate and a 3'-hydroxyl group; requires a central core of homology in the junction. The consensus cleavage sequence is 5'-(A/T)TT(C/G)-3'. Cleavage occurs on the 3'-side of the TT dinucleotide at the point of strand exchange. HJ branch migration catalyzed by RuvA-RuvB allows RuvC to scan DNA until it finds its consensus sequence, where it cleaves and resolves the cruciform DNA. This is Crossover junction endodeoxyribonuclease RuvC from Tolumonas auensis (strain DSM 9187 / NBRC 110442 / TA 4).